Here is a 71-residue protein sequence, read N- to C-terminus: Small ribosomal subunit protein eS17 (71 aa).

This sequence belongs to the eukaryotic ribosomal protein eS17 family.

In Pyrobaculum arsenaticum (strain DSM 13514 / JCM 11321 / PZ6), this protein is Small ribosomal subunit protein eS17.